Reading from the N-terminus, the 400-residue chain is Enoyl-[acyl-carrier-protein] reductase [NADH] (400 aa).

NAD(+)-binding positions include 48–53, 74–75, 111–112, and 139–140; these read GASSGY, FE, DA, and LA. Tyrosine 225 is a substrate binding site. Tyrosine 235 (proton donor) is an active-site residue. NAD(+)-binding positions include lysine 244 and 273–275; that span reads VVT.

Belongs to the TER reductase family. As to quaternary structure, monomer.

The enzyme catalyses a 2,3-saturated acyl-[ACP] + NAD(+) = a (2E)-enoyl-[ACP] + NADH + H(+). The protein operates within lipid metabolism; fatty acid biosynthesis. Functionally, involved in the final reduction of the elongation cycle of fatty acid synthesis (FAS II). Catalyzes the reduction of a carbon-carbon double bond in an enoyl moiety that is covalently linked to an acyl carrier protein (ACP). In Marinomonas sp. (strain MWYL1), this protein is Enoyl-[acyl-carrier-protein] reductase [NADH].